The chain runs to 316 residues: ATP synthase gamma chain (316 aa).

It belongs to the ATPase gamma chain family. In terms of assembly, F-type ATPases have 2 components, CF(1) - the catalytic core - and CF(0) - the membrane proton channel. CF(1) has five subunits: alpha(3), beta(3), gamma(1), delta(1), epsilon(1). CF(0) has three main subunits: a, b and c.

The protein resides in the cellular thylakoid membrane. Functionally, produces ATP from ADP in the presence of a proton gradient across the membrane. The gamma chain is believed to be important in regulating ATPase activity and the flow of protons through the CF(0) complex. The protein is ATP synthase gamma chain of Prochlorococcus marinus (strain MIT 9313).